Reading from the N-terminus, the 806-residue chain is Leucine--tRNA ligase (806 aa).

Residues 40–51 (PYPSGAGLHVGH) carry the 'HIGH' region motif. The 'KMSKS' region motif lies at 578–582 (KMSKS). Position 581 (Lys581) interacts with ATP.

This sequence belongs to the class-I aminoacyl-tRNA synthetase family.

It is found in the cytoplasm. The enzyme catalyses tRNA(Leu) + L-leucine + ATP = L-leucyl-tRNA(Leu) + AMP + diphosphate. The chain is Leucine--tRNA ligase from Staphylococcus aureus (strain MSSA476).